A 61-amino-acid chain; its full sequence is Small ribosomal subunit protein uS14 (61 aa).

Cysteine 24, cysteine 27, cysteine 40, and cysteine 43 together coordinate Zn(2+).

This sequence belongs to the universal ribosomal protein uS14 family. Zinc-binding uS14 subfamily. As to quaternary structure, part of the 30S ribosomal subunit. Contacts proteins S3 and S10. It depends on Zn(2+) as a cofactor.

In terms of biological role, binds 16S rRNA, required for the assembly of 30S particles and may also be responsible for determining the conformation of the 16S rRNA at the A site. The chain is Small ribosomal subunit protein uS14 from Herpetosiphon aurantiacus (strain ATCC 23779 / DSM 785 / 114-95).